The sequence spans 373 residues: Secondary metabolism regulator laeA (373 aa).

The tract at residues 55-81 is disordered; that stretch reads ERDPAAGRWHANGSPSINSTSSKNPDR. Polar residues predominate over residues 67-77; that stretch reads GSPSINSTSSK.

It belongs to the methyltransferase superfamily. LaeA methyltransferase family. In terms of assembly, component of the heterotrimeric velvet complex composed of laeA, veA and velB; VeA acting as a bridging protein between laeA and velB.

The protein localises to the nucleus. It carries out the reaction L-methionyl-[protein] + S-adenosyl-L-methionine = S-methyl-L-methionyl-[protein] + S-adenosyl-L-homocysteine. In terms of biological role, methyltransferase that performs automethylation. No other methyl-accepting substrate has been identified yet. Component of the velvet transcription factor complex that acts as a global regulator for secondary metabolite gene expression. Positively controls expression of 20% to 40% of major classes of secondary metabolite biosynthesis genes such as nonribosomal peptide synthetases, polyketide synthases, and P450 monooxygenases. Controls the expression of the gliotoxin gene cluster. Controls the expression of the fumitremorgin, fumagillin, and pseurotin gene clusters, where genes for fumagillin and pseurotin are physically intertwined in a single supercluster. Regulates the biosynthetic genes required for endocrocin production. Secondary metabolites under the transcriptional regulation of laeA are necessary for inhibition of angiogenesis during invasive infection in mice. Controls the expression of cell surface rodA, a hydrophobin that acts as an antiphagocytic molecule. Also regulates the expression of genes involved in conidial biosynthesis. This Aspergillus fumigatus (strain ATCC MYA-4609 / CBS 101355 / FGSC A1100 / Af293) (Neosartorya fumigata) protein is Secondary metabolism regulator laeA.